We begin with the raw amino-acid sequence, 321 residues long: ATP-dependent 6-phosphofructokinase (321 aa).

Glycine 12 is a binding site for ATP. ADP-binding positions include 22–26 and 55–60; these read RGVVR and RYSVSD. ATP-binding positions include 73–74 and 103–106; these read RF and GDGS. Residue aspartate 104 participates in Mg(2+) binding. 127-129 lines the substrate pocket; sequence TID. Aspartate 129 serves as the catalytic Proton acceptor. ADP is bound at residue arginine 156. Residues arginine 164 and 171-173 contribute to the substrate site; that span reads MGR. ADP is bound by residues 187–189, lysine 213, and 215–217; these read GCE and KRH. Substrate-binding positions include glutamate 224, arginine 245, and 251-254; that span reads HIQR.

It belongs to the phosphofructokinase type A (PFKA) family. ATP-dependent PFK group I subfamily. Prokaryotic clade 'B1' sub-subfamily. In terms of assembly, homotetramer. It depends on Mg(2+) as a cofactor.

The protein localises to the cytoplasm. The catalysed reaction is beta-D-fructose 6-phosphate + ATP = beta-D-fructose 1,6-bisphosphate + ADP + H(+). It participates in carbohydrate degradation; glycolysis; D-glyceraldehyde 3-phosphate and glycerone phosphate from D-glucose: step 3/4. Its activity is regulated as follows. Allosterically activated by ADP and other diphosphonucleosides, and allosterically inhibited by phosphoenolpyruvate. Catalyzes the phosphorylation of D-fructose 6-phosphate to fructose 1,6-bisphosphate by ATP, the first committing step of glycolysis. In Histophilus somni (strain 129Pt) (Haemophilus somnus), this protein is ATP-dependent 6-phosphofructokinase.